A 469-amino-acid chain; its full sequence is Ribulose bisphosphate carboxylase large chain (469 aa).

Residue K5 is modified to N6,N6,N6-trimethyllysine. Positions 114 and 164 each coordinate substrate. The Proton acceptor role is filled by K166. K168 contacts substrate. Residues K192, D194, and E195 each contribute to the Mg(2+) site. K192 carries the N6-carboxylysine modification. The active-site Proton acceptor is the H285. Substrate contacts are provided by R286, H318, and S370.

The protein belongs to the RuBisCO large chain family. Type I subfamily. In terms of assembly, heterohexadecamer of 8 large chains and 8 small chains; disulfide-linked. The disulfide link is formed within the large subunit homodimers. Requires Mg(2+) as cofactor. In terms of processing, the disulfide bond which can form in the large chain dimeric partners within the hexadecamer appears to be associated with oxidative stress and protein turnover.

Its subcellular location is the plastid. It localises to the chloroplast. It carries out the reaction 2 (2R)-3-phosphoglycerate + 2 H(+) = D-ribulose 1,5-bisphosphate + CO2 + H2O. The enzyme catalyses D-ribulose 1,5-bisphosphate + O2 = 2-phosphoglycolate + (2R)-3-phosphoglycerate + 2 H(+). In terms of biological role, ruBisCO catalyzes two reactions: the carboxylation of D-ribulose 1,5-bisphosphate, the primary event in carbon dioxide fixation, as well as the oxidative fragmentation of the pentose substrate in the photorespiration process. Both reactions occur simultaneously and in competition at the same active site. The protein is Ribulose bisphosphate carboxylase large chain of Calycophyllum candidissimum (Degame lemonwood tree).